We begin with the raw amino-acid sequence, 348 residues long: NADH-quinone oxidoreductase subunit H (348 aa).

The next 8 membrane-spanning stretches (helical) occupy residues 21–41 (IIGILVIALPLMLAVAMIIYA), 87–107 (GLFLLAPIITFTVALIVWAVI), 120–140 (IGLLYVLAASSIGVYGVIIAG), 166–186 (IGFVLISVVLWTGSFNMSAIV), 193–213 (IFGFINGYGFNPLLFPMAVVF), 258–278 (NVILMCGLNAILFWGGWLPPV), 283–303 (LYMVPGIIWFFAKLLFFFFVF), and 323–343 (WKVFLPLSLFWVFLVSGWLML).

The protein belongs to the complex I subunit 1 family. NDH-1 is composed of 14 different subunits. Subunits NuoA, H, J, K, L, M, N constitute the membrane sector of the complex.

It is found in the cell inner membrane. The catalysed reaction is a quinone + NADH + 5 H(+)(in) = a quinol + NAD(+) + 4 H(+)(out). NDH-1 shuttles electrons from NADH, via FMN and iron-sulfur (Fe-S) centers, to quinones in the respiratory chain. The immediate electron acceptor for the enzyme in this species is believed to be ubiquinone. Couples the redox reaction to proton translocation (for every two electrons transferred, four hydrogen ions are translocated across the cytoplasmic membrane), and thus conserves the redox energy in a proton gradient. This subunit may bind ubiquinone. The polypeptide is NADH-quinone oxidoreductase subunit H (Rhizorhabdus wittichii (strain DSM 6014 / CCUG 31198 / JCM 15750 / NBRC 105917 / EY 4224 / RW1) (Sphingomonas wittichii)).